The primary structure comprises 230 residues: DNA repair protein RecO (230 aa).

It belongs to the RecO family.

Involved in DNA repair and RecF pathway recombination. This chain is DNA repair protein RecO, found in Pseudoalteromonas translucida (strain TAC 125).